The chain runs to 285 residues: Phosphatidylglycerol--prolipoprotein diacylglyceryl transferase (285 aa).

4 helical membrane-spanning segments follow: residues 26–46 (IALH…WWYV), 71–91 (FVVW…VLIW), 107–127 (WDGG…IIWF), and 133–153 (INIW…IGVV). R154 is an a 1,2-diacyl-sn-glycero-3-phospho-(1'-sn-glycerol) binding site. The next 3 membrane-spanning stretches (helical) occupy residues 194–214 (LMEG…FKAF), 218–238 (GTVA…SEIF), and 256–276 (GFTY…YAIF).

It belongs to the Lgt family.

Its subcellular location is the cell inner membrane. It catalyses the reaction L-cysteinyl-[prolipoprotein] + a 1,2-diacyl-sn-glycero-3-phospho-(1'-sn-glycerol) = an S-1,2-diacyl-sn-glyceryl-L-cysteinyl-[prolipoprotein] + sn-glycerol 1-phosphate + H(+). It functions in the pathway protein modification; lipoprotein biosynthesis (diacylglyceryl transfer). Catalyzes the transfer of the diacylglyceryl group from phosphatidylglycerol to the sulfhydryl group of the N-terminal cysteine of a prolipoprotein, the first step in the formation of mature lipoproteins. In Bartonella bacilliformis (strain ATCC 35685 / KC583 / Herrer 020/F12,63), this protein is Phosphatidylglycerol--prolipoprotein diacylglyceryl transferase.